A 178-amino-acid chain; its full sequence is Interleukin-1 receptor antagonist protein (178 aa).

A signal peptide spans 1–26 (MEICWGPYSHLISLLLILLFHSEAAC). An intrachain disulfide couples C92 to C142. N-linked (GlcNAc...) asparagine glycosylation is present at N110.

It belongs to the IL-1 family.

The protein localises to the secreted. Its subcellular location is the cytoplasm. Functionally, anti-inflammatory antagonist of interleukin-1 family of proinflammatory cytokines such as interleukin-1beta/IL1B and interleukin-1alpha/IL1A. Protects from immune dysregulation and uncontrolled systemic inflammation triggered by IL1 for a range of innate stimulatory agents such as pathogens. This Mus musculus (Mouse) protein is Interleukin-1 receptor antagonist protein (Il1rn).